A 398-amino-acid polypeptide reads, in one-letter code: Succinate--CoA ligase [ADP-forming] subunit beta (398 aa).

The 246-residue stretch at 9-254 folds into the ATP-grasp domain; sequence KALLKSYGAP…TTEEDDKEIE (246 aa). ATP contacts are provided by residues Lys46, 53–55, Glu109, Ala112, and Glu117; that span reads GRG. Residues Asn209 and Asp223 each contribute to the Mg(2+) site. Residues Asn274 and 331 to 333 contribute to the substrate site; that span reads GIM.

This sequence belongs to the succinate/malate CoA ligase beta subunit family. As to quaternary structure, heterotetramer of two alpha and two beta subunits. Mg(2+) is required as a cofactor.

The catalysed reaction is succinate + ATP + CoA = succinyl-CoA + ADP + phosphate. The enzyme catalyses GTP + succinate + CoA = succinyl-CoA + GDP + phosphate. The protein operates within carbohydrate metabolism; tricarboxylic acid cycle; succinate from succinyl-CoA (ligase route): step 1/1. In terms of biological role, succinyl-CoA synthetase functions in the citric acid cycle (TCA), coupling the hydrolysis of succinyl-CoA to the synthesis of either ATP or GTP and thus represents the only step of substrate-level phosphorylation in the TCA. The beta subunit provides nucleotide specificity of the enzyme and binds the substrate succinate, while the binding sites for coenzyme A and phosphate are found in the alpha subunit. In Rhizobium meliloti (strain 1021) (Ensifer meliloti), this protein is Succinate--CoA ligase [ADP-forming] subunit beta.